The sequence spans 184 residues: ATP synthase subunit b 1 (184 aa).

Residues 4–24 (LSILAVLAASPAMAATGPFLS) form a helical membrane-spanning segment.

Belongs to the ATPase B chain family. F-type ATPases have 2 components, F(1) - the catalytic core - and F(0) - the membrane proton channel. F(1) has five subunits: alpha(3), beta(3), gamma(1), delta(1), epsilon(1). F(0) has three main subunits: a(1), b(2) and c(10-14). The alpha and beta chains form an alternating ring which encloses part of the gamma chain. F(1) is attached to F(0) by a central stalk formed by the gamma and epsilon chains, while a peripheral stalk is formed by the delta and b chains.

It is found in the cell inner membrane. Its function is as follows. F(1)F(0) ATP synthase produces ATP from ADP in the presence of a proton or sodium gradient. F-type ATPases consist of two structural domains, F(1) containing the extramembraneous catalytic core and F(0) containing the membrane proton channel, linked together by a central stalk and a peripheral stalk. During catalysis, ATP synthesis in the catalytic domain of F(1) is coupled via a rotary mechanism of the central stalk subunits to proton translocation. Functionally, component of the F(0) channel, it forms part of the peripheral stalk, linking F(1) to F(0). This is ATP synthase subunit b 1 from Cereibacter sphaeroides (strain ATCC 17023 / DSM 158 / JCM 6121 / CCUG 31486 / LMG 2827 / NBRC 12203 / NCIMB 8253 / ATH 2.4.1.) (Rhodobacter sphaeroides).